A 243-amino-acid polypeptide reads, in one-letter code: 1-(5-phosphoribosyl)-5-[(5-phosphoribosylamino)methylideneamino] imidazole-4-carboxamide isomerase (243 aa).

Asp8 functions as the Proton acceptor in the catalytic mechanism. The active-site Proton donor is Asp129.

The protein belongs to the HisA/HisF family.

The protein localises to the cytoplasm. It catalyses the reaction 1-(5-phospho-beta-D-ribosyl)-5-[(5-phospho-beta-D-ribosylamino)methylideneamino]imidazole-4-carboxamide = 5-[(5-phospho-1-deoxy-D-ribulos-1-ylimino)methylamino]-1-(5-phospho-beta-D-ribosyl)imidazole-4-carboxamide. It functions in the pathway amino-acid biosynthesis; L-histidine biosynthesis; L-histidine from 5-phospho-alpha-D-ribose 1-diphosphate: step 4/9. The protein is 1-(5-phosphoribosyl)-5-[(5-phosphoribosylamino)methylideneamino] imidazole-4-carboxamide isomerase of Carboxydothermus hydrogenoformans (strain ATCC BAA-161 / DSM 6008 / Z-2901).